Reading from the N-terminus, the 144-residue chain is Large ribosomal subunit protein uL15 (144 aa).

Residues Met1–Arg48 are disordered.

This sequence belongs to the universal ribosomal protein uL15 family. In terms of assembly, part of the 50S ribosomal subunit.

In terms of biological role, binds to the 23S rRNA. This is Large ribosomal subunit protein uL15 from Chlamydia abortus (strain DSM 27085 / S26/3) (Chlamydophila abortus).